Reading from the N-terminus, the 387-residue chain is MSKRDYYEVLGVAKTAGEAELKSAFRKLAMAYHPDRNPGDKEAEIKFKEVNEAYQTLSDDQKRAAYDRFGHAAFSQGGPGGPGFGADFGDFMSDIFDTFFGDARAGGAGPRGGGGRAGGRERGADLRYNLEISLEEAFTGKTETIRLPTSVTCEVCAGSGAKAGSKPRVCPTCGGYGRVRAAQGFFAIERTCPNCQGRGEIIDDPCAACGGAGRVTRERTLSVNVPAGVDDGLRIRLAGEGESGLRGGPAGDLYIFLSIKPHPFFQRDGADLFCRVPISMVTAALSGEITVPVIDGSHTTVRVPGGTQTNKQFRLKGKGMPVLRSRDVGDLYIQVFVETPQNLTKRQRELLQEFDQLGSQADNHPESAGFFSRVKEFFDGLSGSGRA.

The J domain maps to 5 to 70 (DYYEVLGVAK…QKRAAYDRFG (66 aa)). The CR-type zinc-finger motif lies at 140-218 (GKTETIRLPT…CGGAGRVTRE (79 aa)). The Zn(2+) site is built by C153, C156, C170, C173, C192, C195, C206, and C209. CXXCXGXG motif repeat units follow at residues 153 to 160 (CEVCAGSG), 170 to 177 (CPTCGGYG), 192 to 199 (CPNCQGRG), and 206 to 213 (CAACGGAG).

The protein belongs to the DnaJ family. Homodimer. Zn(2+) is required as a cofactor.

It is found in the cytoplasm. Participates actively in the response to hyperosmotic and heat shock by preventing the aggregation of stress-denatured proteins and by disaggregating proteins, also in an autonomous, DnaK-independent fashion. Unfolded proteins bind initially to DnaJ; upon interaction with the DnaJ-bound protein, DnaK hydrolyzes its bound ATP, resulting in the formation of a stable complex. GrpE releases ADP from DnaK; ATP binding to DnaK triggers the release of the substrate protein, thus completing the reaction cycle. Several rounds of ATP-dependent interactions between DnaJ, DnaK and GrpE are required for fully efficient folding. Also involved, together with DnaK and GrpE, in the DNA replication of plasmids through activation of initiation proteins. The sequence is that of Chaperone protein DnaJ from Methylobacterium sp. (strain 4-46).